Consider the following 445-residue polypeptide: Sporulation protein YkvU (445 aa).

Transmembrane regions (helical) follow at residues 7–29, 39–61, 82–104, 109–131, 144–166, 172–194, 237–259, 269–291, 312–334, 349–371, 376–395, and 400–422; these read GIIL…NMIL, GLYM…ELPI, AFRM…LPFI, TYHP…TSIA, IAIA…FQWY, MAVL…YLYS, VNAI…GTAA, VAVT…MIPS, IFIT…GPLT, LLWP…IGMG, AFYH…YVLG, and LQML…LHYA.

It is found in the forespore membrane. The protein is Sporulation protein YkvU (ykvU) of Bacillus subtilis (strain 168).